A 362-amino-acid chain; its full sequence is Aminomethyltransferase (362 aa).

Belongs to the GcvT family. The glycine cleavage system is composed of four proteins: P, T, L and H.

It catalyses the reaction N(6)-[(R)-S(8)-aminomethyldihydrolipoyl]-L-lysyl-[protein] + (6S)-5,6,7,8-tetrahydrofolate = N(6)-[(R)-dihydrolipoyl]-L-lysyl-[protein] + (6R)-5,10-methylene-5,6,7,8-tetrahydrofolate + NH4(+). The glycine cleavage system catalyzes the degradation of glycine. This is Aminomethyltransferase from Listeria innocua serovar 6a (strain ATCC BAA-680 / CLIP 11262).